We begin with the raw amino-acid sequence, 294 residues long: Sarcotoxin II-2 (294 aa).

A signal peptide spans 1–22 (MKSFVFFAACFAIVALNSLAHA). The propeptide at 23-24 (YP) is removed by a dipeptidylpeptidase. Glutamine 25 carries the post-translational modification Pyrrolidone carboxylic acid. At arginine 293 the chain carries Arginine amide.

The protein belongs to the attacin/sarcotoxin-2 family. Synthesized by the fat body and is eventually secreted into the hemolymph.

The protein resides in the secreted. Its function is as follows. Sarcotoxin II is an antibacterial protein which plays a role in the inflammatory response of this insect. The main effect of sarcotoxin II on E.coli may be the inhibition of cell wall synthesis, including septum formation. In Sarcophaga peregrina (Flesh fly), this protein is Sarcotoxin II-2.